The following is a 106-amino-acid chain: Small ribosomal subunit protein uS17 (106 aa).

The protein belongs to the universal ribosomal protein uS17 family. Part of the 30S ribosomal subunit.

One of the primary rRNA binding proteins, it binds specifically to the 5'-end of 16S ribosomal RNA. In Methanosphaera stadtmanae (strain ATCC 43021 / DSM 3091 / JCM 11832 / MCB-3), this protein is Small ribosomal subunit protein uS17.